The sequence spans 314 residues: Acetyl-coenzyme A carboxylase carboxyl transferase subunit beta (314 aa).

Positions 37–307 (LWQKCPACDA…MSLPALEPTY (271 aa)) constitute a CoA carboxyltransferase N-terminal domain. C41, C44, C60, and C63 together coordinate Zn(2+). A C4-type zinc finger spans residues 41–63 (CPACDALTYTKDLQQNWQVCPSC).

It belongs to the AccD/PCCB family. In terms of assembly, acetyl-CoA carboxylase is a heterohexamer composed of biotin carboxyl carrier protein (AccB), biotin carboxylase (AccC) and two subunits each of ACCase subunit alpha (AccA) and ACCase subunit beta (AccD). Zn(2+) serves as cofactor.

It localises to the cytoplasm. It carries out the reaction N(6)-carboxybiotinyl-L-lysyl-[protein] + acetyl-CoA = N(6)-biotinyl-L-lysyl-[protein] + malonyl-CoA. The protein operates within lipid metabolism; malonyl-CoA biosynthesis; malonyl-CoA from acetyl-CoA: step 1/1. Functionally, component of the acetyl coenzyme A carboxylase (ACC) complex. Biotin carboxylase (BC) catalyzes the carboxylation of biotin on its carrier protein (BCCP) and then the CO(2) group is transferred by the transcarboxylase to acetyl-CoA to form malonyl-CoA. The polypeptide is Acetyl-coenzyme A carboxylase carboxyl transferase subunit beta (Synechococcus sp. (strain JA-3-3Ab) (Cyanobacteria bacterium Yellowstone A-Prime)).